The primary structure comprises 339 residues: ATPase GET3 (339 aa).

34 to 41 (KGGVGKTT) lines the ATP pocket. Asp-63 is a catalytic residue. ATP-binding residues include Glu-244 and Asn-271. Zn(2+) is bound by residues Cys-282 and Cys-285.

Belongs to the arsA ATPase family. In terms of assembly, homodimer.

It localises to the cytoplasm. The protein resides in the endoplasmic reticulum. Its function is as follows. ATPase required for the post-translational delivery of tail-anchored (TA) proteins to the endoplasmic reticulum. Recognizes and selectively binds the transmembrane domain of TA proteins in the cytosol. This complex then targets to the endoplasmic reticulum by membrane-bound receptors, where the tail-anchored protein is released for insertion. This process is regulated by ATP binding and hydrolysis. ATP binding drives the homodimer towards the closed dimer state, facilitating recognition of newly synthesized TA membrane proteins. ATP hydrolysis is required for insertion. Subsequently, the homodimer reverts towards the open dimer state, lowering its affinity for the membrane-bound receptor, and returning it to the cytosol to initiate a new round of targeting. This is ATPase GET3 from Podospora anserina (strain S / ATCC MYA-4624 / DSM 980 / FGSC 10383) (Pleurage anserina).